The sequence spans 508 residues: Phenylalanine--tRNA ligase alpha subunit (508 aa).

Residue alanine 2 is modified to N-acetylalanine. Serine 193 and serine 301 each carry phosphoserine. Position 311 is an N6-acetyllysine (lysine 311). Residues threonine 329, 372 to 374 (QIE), and tyrosine 412 each bind L-phenylalanine. Glutamate 414 is a Mg(2+) binding site. Phenylalanine 438 is an L-phenylalanine binding site.

This sequence belongs to the class-II aminoacyl-tRNA synthetase family. Phe-tRNA synthetase alpha subunit type 2 subfamily. As to quaternary structure, heterotetramer; dimer of two heterodimers formed by FARSA and FARSB. It depends on Mg(2+) as a cofactor.

It localises to the cytoplasm. The catalysed reaction is tRNA(Phe) + L-phenylalanine + ATP = L-phenylalanyl-tRNA(Phe) + AMP + diphosphate + H(+). This Mus musculus (Mouse) protein is Phenylalanine--tRNA ligase alpha subunit (Farsa).